Here is a 656-residue protein sequence, read N- to C-terminus: PAN2-PAN3 deadenylation complex subunit PAN3 (656 aa).

The C3H1-type zinc finger occupies 15–44; it reads SFKGTQCRNIIIHGYCKFENEGCQFNHGNS. The disordered stretch occupies residues 71 to 104; it reads KTSSSFTPGKSPAVRSPDFSSLPAFQPGAPVNDQ. The PABPC-interacting motif-2 (PAM-2) motif lies at 128–148; sequence AFAPSFNPYASESFTPSVSAG. The interval 271–525 is pseudokinase domain; the sequence is QVFPRGSLPD…NIEDFTKLFS (255 aa). ATP contacts are provided by residues arginine 325, 375–382, and 428–429; these read DYYPQSQS and KK. The stretch at 526 to 564 forms a coiled coil; the sequence is HKVLSVVNSLQYNSEYLEQQLSRELENARLFRLMCKLNA. The tract at residues 565–656 is knob domain; sequence IYGRLESRID…IDSTFRALTQ (92 aa).

The protein belongs to the protein kinase superfamily. PAN3 family. Homodimer. Forms a heterotrimer with a catalytic subunit PAN2 to form the poly(A)-nuclease (PAN) deadenylation complex. Interacts (via PAM-2 motif) with poly(A)-binding protein PAB1 (via PABC domain), conferring substrate specificity of the enzyme complex.

The protein localises to the cytoplasm. Its function is as follows. Regulatory subunit of the poly(A)-nuclease (PAN) deadenylation complex, one of two cytoplasmic mRNA deadenylases involved in mRNA turnover. PAN specifically shortens poly(A) tails of RNA and the activity is stimulated by poly(A)-binding protein PAB1. PAN deadenylation is followed by rapid degradation of the shortened mRNA tails by the CCR4-NOT complex. Deadenylated mRNAs are then degraded by two alternative mechanisms, namely exosome-mediated 3'-5' exonucleolytic degradation, or deadenylation-dependent mRNA decaping and subsequent 5'-3' exonucleolytic degradation by XRN1. May also be involved in post-transcriptional maturation of mRNA poly(A) tails. PAN3 acts as a positive regulator for PAN activity, recruiting the catalytic subunit PAN2 to mRNA via its interaction with RNA and with PAB1. This Kluyveromyces lactis (strain ATCC 8585 / CBS 2359 / DSM 70799 / NBRC 1267 / NRRL Y-1140 / WM37) (Yeast) protein is PAN2-PAN3 deadenylation complex subunit PAN3.